The chain runs to 232 residues: 5'-methylthioadenosine/S-adenosylhomocysteine nucleosidase (232 aa).

Glutamate 12 (proton acceptor) is an active-site residue. Substrate is bound by residues glycine 78, isoleucine 152, and 173-174 (ME). Catalysis depends on aspartate 197, which acts as the Proton donor.

It belongs to the PNP/UDP phosphorylase family. MtnN subfamily. As to quaternary structure, homodimer.

It carries out the reaction S-adenosyl-L-homocysteine + H2O = S-(5-deoxy-D-ribos-5-yl)-L-homocysteine + adenine. The catalysed reaction is S-methyl-5'-thioadenosine + H2O = 5-(methylsulfanyl)-D-ribose + adenine. The enzyme catalyses 5'-deoxyadenosine + H2O = 5-deoxy-D-ribose + adenine. Its pathway is amino-acid biosynthesis; L-methionine biosynthesis via salvage pathway; S-methyl-5-thio-alpha-D-ribose 1-phosphate from S-methyl-5'-thioadenosine (hydrolase route): step 1/2. Catalyzes the irreversible cleavage of the glycosidic bond in both 5'-methylthioadenosine (MTA) and S-adenosylhomocysteine (SAH/AdoHcy) to adenine and the corresponding thioribose, 5'-methylthioribose and S-ribosylhomocysteine, respectively. Also cleaves 5'-deoxyadenosine, a toxic by-product of radical S-adenosylmethionine (SAM) enzymes, into 5-deoxyribose and adenine. Thus, is required for in vivo function of the radical SAM enzymes biotin synthase and lipoic acid synthase, that are inhibited by 5'-deoxyadenosine accumulation. The polypeptide is 5'-methylthioadenosine/S-adenosylhomocysteine nucleosidase (Salmonella agona (strain SL483)).